The primary structure comprises 239 residues: Ribonuclease PH (239 aa).

Phosphate-binding positions include R87 and 125–127; that span reads GTR.

It belongs to the RNase PH family. In terms of assembly, homohexameric ring arranged as a trimer of dimers.

It carries out the reaction tRNA(n+1) + phosphate = tRNA(n) + a ribonucleoside 5'-diphosphate. Phosphorolytic 3'-5' exoribonuclease that plays an important role in tRNA 3'-end maturation. Removes nucleotide residues following the 3'-CCA terminus of tRNAs; can also add nucleotides to the ends of RNA molecules by using nucleoside diphosphates as substrates, but this may not be physiologically important. Probably plays a role in initiation of 16S rRNA degradation (leading to ribosome degradation) during starvation. The protein is Ribonuclease PH of Syntrophomonas wolfei subsp. wolfei (strain DSM 2245B / Goettingen).